Consider the following 146-residue polypeptide: Hemoglobin subunit beta (146 aa).

V1 carries the post-translational modification N-acetylvaline. Positions 2–146 (HLTAEEKNAI…VANALAHKYH (145 aa)) constitute a Globin domain. T12 is modified (phosphothreonine). K59 carries the N6-acetyllysine modification. A heme b-binding site is contributed by H63. N6-acetyllysine is present on K82. Position 92 (H92) interacts with heme b. C93 carries the S-nitrosocysteine modification. K144 carries the post-translational modification N6-acetyllysine.

Belongs to the globin family. Heterotetramer of two alpha chains and two beta chains. In terms of tissue distribution, red blood cells.

Involved in oxygen transport from the lung to the various peripheral tissues. The chain is Hemoglobin subunit beta (HBB) from Osphranter rufus (Red kangaroo).